The following is a 217-amino-acid chain: Phosphoribosylformylglycinamidine synthase subunit PurQ (217 aa).

In terms of domain architecture, Glutamine amidotransferase type-1 spans S2–S217. The Nucleophile role is filled by C86. Active-site residues include H194 and E196.

As to quaternary structure, part of the FGAM synthase complex composed of 1 PurL, 1 PurQ and 2 PurS subunits.

Its subcellular location is the cytoplasm. The catalysed reaction is N(2)-formyl-N(1)-(5-phospho-beta-D-ribosyl)glycinamide + L-glutamine + ATP + H2O = 2-formamido-N(1)-(5-O-phospho-beta-D-ribosyl)acetamidine + L-glutamate + ADP + phosphate + H(+). The enzyme catalyses L-glutamine + H2O = L-glutamate + NH4(+). The protein operates within purine metabolism; IMP biosynthesis via de novo pathway; 5-amino-1-(5-phospho-D-ribosyl)imidazole from N(2)-formyl-N(1)-(5-phospho-D-ribosyl)glycinamide: step 1/2. Functionally, part of the phosphoribosylformylglycinamidine synthase complex involved in the purines biosynthetic pathway. Catalyzes the ATP-dependent conversion of formylglycinamide ribonucleotide (FGAR) and glutamine to yield formylglycinamidine ribonucleotide (FGAM) and glutamate. The FGAM synthase complex is composed of three subunits. PurQ produces an ammonia molecule by converting glutamine to glutamate. PurL transfers the ammonia molecule to FGAR to form FGAM in an ATP-dependent manner. PurS interacts with PurQ and PurL and is thought to assist in the transfer of the ammonia molecule from PurQ to PurL. The polypeptide is Phosphoribosylformylglycinamidine synthase subunit PurQ (Parasynechococcus marenigrum (strain WH8102)).